We begin with the raw amino-acid sequence, 186 residues long: Nicotinamide-nucleotide adenylyltransferase (186 aa).

The protein belongs to the archaeal NMN adenylyltransferase family.

The protein resides in the cytoplasm. The catalysed reaction is beta-nicotinamide D-ribonucleotide + ATP + H(+) = diphosphate + NAD(+). Its pathway is cofactor biosynthesis; NAD(+) biosynthesis; NAD(+) from nicotinamide D-ribonucleotide: step 1/1. This is Nicotinamide-nucleotide adenylyltransferase from Thermococcus sibiricus (strain DSM 12597 / MM 739).